The sequence spans 216 residues: ATP-dependent dethiobiotin synthetase BioD (216 aa).

Residue 13-18 (EVGKTY) participates in ATP binding. Position 17 (threonine 17) interacts with Mg(2+). Residue lysine 38 is part of the active site. Threonine 42 is a substrate binding site. Residues aspartate 47 and 112-115 (EGVG) contribute to the ATP site. 2 residues coordinate Mg(2+): aspartate 47 and glutamate 112.

It belongs to the dethiobiotin synthetase family. In terms of assembly, homodimer. The cofactor is Mg(2+).

The protein resides in the cytoplasm. The enzyme catalyses (7R,8S)-7,8-diammoniononanoate + CO2 + ATP = (4R,5S)-dethiobiotin + ADP + phosphate + 3 H(+). It participates in cofactor biosynthesis; biotin biosynthesis; biotin from 7,8-diaminononanoate: step 1/2. Catalyzes a mechanistically unusual reaction, the ATP-dependent insertion of CO2 between the N7 and N8 nitrogen atoms of 7,8-diaminopelargonic acid (DAPA, also called 7,8-diammoniononanoate) to form a ureido ring. This chain is ATP-dependent dethiobiotin synthetase BioD, found in Endomicrobium trichonymphae.